A 137-amino-acid chain; its full sequence is uncharacterized protein (137 aa).

The helical transmembrane segment at 116–136 (YLSIANLATLLLFGIIGLSII) threads the bilayer.

The protein localises to the host membrane. This is an uncharacterized protein from His1 virus (isolate Australia/Victoria) (His1V).